Reading from the N-terminus, the 492-residue chain is N-succinylglutamate 5-semialdehyde dehydrogenase (492 aa).

220–225 provides a ligand contact to NAD(+); that stretch reads GSANTG. Active-site residues include glutamate 243 and cysteine 277.

This sequence belongs to the aldehyde dehydrogenase family. AstD subfamily.

It catalyses the reaction N-succinyl-L-glutamate 5-semialdehyde + NAD(+) + H2O = N-succinyl-L-glutamate + NADH + 2 H(+). It functions in the pathway amino-acid degradation; L-arginine degradation via AST pathway; L-glutamate and succinate from L-arginine: step 4/5. Its function is as follows. Catalyzes the NAD-dependent reduction of succinylglutamate semialdehyde into succinylglutamate. The chain is N-succinylglutamate 5-semialdehyde dehydrogenase from Escherichia coli O17:K52:H18 (strain UMN026 / ExPEC).